The chain runs to 91 residues: Small ribosomal subunit protein uS19 (91 aa).

The protein belongs to the universal ribosomal protein uS19 family.

Functionally, protein S19 forms a complex with S13 that binds strongly to the 16S ribosomal RNA. The protein is Small ribosomal subunit protein uS19 of Fusobacterium nucleatum subsp. nucleatum (strain ATCC 25586 / DSM 15643 / BCRC 10681 / CIP 101130 / JCM 8532 / KCTC 2640 / LMG 13131 / VPI 4355).